We begin with the raw amino-acid sequence, 562 residues long: Laccase-2 (562 aa).

An N-terminal signal peptide occupies residues 1 to 26 (MASAASSLPLLVSSLLLALFALGAHA). 2 consecutive Plastocyanin-like domains span residues 34 to 150 (DIVM…PAAG) and 160 to 312 (DEAE…YAGV). N-linked (GlcNAc...) asparagine glycans are attached at residues N39, N53, N72, and N80. Cu cation-binding residues include H84 and H86. N-linked (GlcNAc...) asparagine glycosylation occurs at N118. 2 residues coordinate Cu cation: H129 and H131. N189, N244, N300, N328, N376, N386, N421, and N445 each carry an N-linked (GlcNAc...) asparagine glycan. One can recognise a Plastocyanin-like 3 domain in the interval 411-546 (DFPDRPPARF…KMAFLVEDGS (136 aa)). Residues H463, H466, H468, H525, C526, H527, and H531 each coordinate Cu cation.

This sequence belongs to the multicopper oxidase family. Cu cation serves as cofactor.

The protein localises to the secreted. Its subcellular location is the extracellular space. The protein resides in the apoplast. It carries out the reaction 4 hydroquinone + O2 = 4 benzosemiquinone + 2 H2O. Functionally, lignin degradation and detoxification of lignin-derived products. The chain is Laccase-2 (LAC2) from Oryza sativa subsp. japonica (Rice).